The chain runs to 178 residues: uncharacterized protein (178 aa).

This is an uncharacterized protein from Saccharomyces cerevisiae (strain ATCC 204508 / S288c) (Baker's yeast).